Here is a 124-residue protein sequence, read N- to C-terminus: Small ribosomal subunit protein uS12 (124 aa).

Aspartate 89 carries the post-translational modification 3-methylthioaspartic acid.

It belongs to the universal ribosomal protein uS12 family. As to quaternary structure, part of the 30S ribosomal subunit. Contacts proteins S8 and S17. May interact with IF1 in the 30S initiation complex.

Functionally, with S4 and S5 plays an important role in translational accuracy. Interacts with and stabilizes bases of the 16S rRNA that are involved in tRNA selection in the A site and with the mRNA backbone. Located at the interface of the 30S and 50S subunits, it traverses the body of the 30S subunit contacting proteins on the other side and probably holding the rRNA structure together. The combined cluster of proteins S8, S12 and S17 appears to hold together the shoulder and platform of the 30S subunit. This is Small ribosomal subunit protein uS12 from Caldanaerobacter subterraneus subsp. tengcongensis (strain DSM 15242 / JCM 11007 / NBRC 100824 / MB4) (Thermoanaerobacter tengcongensis).